A 126-amino-acid chain; its full sequence is Fluoride-specific ion channel FluC (126 aa).

4 helical membrane-spanning segments follow: residues 5 to 25 (ILCVGTGGFVGAILRFLFYFG), 34 to 54 (YIFIATICVNIIGSFIIGFVL), 71 to 91 (VTGLLGALTTFSTFTYENAVF), and 100 to 120 (FFLNITMSIILCLIFCFLGIY). Residues G76 and T79 each coordinate Na(+).

The protein belongs to the fluoride channel Fluc/FEX (TC 1.A.43) family.

Its subcellular location is the cell inner membrane. The catalysed reaction is fluoride(in) = fluoride(out). With respect to regulation, na(+) is not transported, but it plays an essential structural role and its presence is essential for fluoride channel function. Functionally, fluoride-specific ion channel. Important for reducing fluoride concentration in the cell, thus reducing its toxicity. This is Fluoride-specific ion channel FluC from Campylobacter hominis (strain ATCC BAA-381 / DSM 21671 / CCUG 45161 / LMG 19568 / NCTC 13146 / CH001A).